The sequence spans 61 residues: Japonicin-1CDYa (61 aa).

The first 22 residues, 1-22 (MFTLKKSLLLLFFLGVINVSLC), serve as a signal peptide directing secretion. The propeptide occupies 23-45 (EEERDADEEERRDDPEERDVEVE). C55 and C61 form a disulfide bridge.

This sequence belongs to the frog skin active peptide (FSAP) family. Brevinin subfamily. Expressed by the skin glands.

It is found in the secreted. Functionally, antimicrobial peptide. Has low activity against the Gram-positive bacterium S.aureus (MIC&gt;100 uM) and the Gram-negative bacterium E.coli (MIC=25 uM). Lacks hemolytic activity against human erythrocytes. This Rana dybowskii (Dybovsky's frog) protein is Japonicin-1CDYa.